The sequence spans 1173 residues: DNA-directed RNA polymerase subunit beta (1173 aa).

Belongs to the RNA polymerase beta chain family. The RNAP catalytic core consists of 2 alpha, 1 beta, 1 beta' and 1 omega subunit. When a sigma factor is associated with the core the holoenzyme is formed, which can initiate transcription.

The catalysed reaction is RNA(n) + a ribonucleoside 5'-triphosphate = RNA(n+1) + diphosphate. DNA-dependent RNA polymerase catalyzes the transcription of DNA into RNA using the four ribonucleoside triphosphates as substrates. The sequence is that of DNA-directed RNA polymerase subunit beta from Kosmotoga olearia (strain ATCC BAA-1733 / DSM 21960 / TBF 19.5.1).